Here is a 28-residue protein sequence, read N- to C-terminus: Mast cell degranulating peptide (28 aa).

Intrachain disulfides connect C2–C18 and C4–C22.

In terms of tissue distribution, expressed by the venom gland.

The protein resides in the secreted. In terms of biological role, mast cell degranulating peptide. This chain is Mast cell degranulating peptide, found in Bombus pensylvanicus (American bumblebee).